We begin with the raw amino-acid sequence, 227 residues long: Phosphoribosylformylglycinamidine synthase subunit PurQ (227 aa).

In terms of domain architecture, Glutamine amidotransferase type-1 spans 2–226 (KFAVIQFPGS…VKAWKEEQVN (225 aa)). Catalysis depends on C86, which acts as the Nucleophile. Catalysis depends on residues H195 and E197.

In terms of assembly, part of the FGAM synthase complex composed of 1 PurL, 1 PurQ and 2 PurS subunits.

It is found in the cytoplasm. It catalyses the reaction N(2)-formyl-N(1)-(5-phospho-beta-D-ribosyl)glycinamide + L-glutamine + ATP + H2O = 2-formamido-N(1)-(5-O-phospho-beta-D-ribosyl)acetamidine + L-glutamate + ADP + phosphate + H(+). The catalysed reaction is L-glutamine + H2O = L-glutamate + NH4(+). Its pathway is purine metabolism; IMP biosynthesis via de novo pathway; 5-amino-1-(5-phospho-D-ribosyl)imidazole from N(2)-formyl-N(1)-(5-phospho-D-ribosyl)glycinamide: step 1/2. Part of the phosphoribosylformylglycinamidine synthase complex involved in the purines biosynthetic pathway. Catalyzes the ATP-dependent conversion of formylglycinamide ribonucleotide (FGAR) and glutamine to yield formylglycinamidine ribonucleotide (FGAM) and glutamate. The FGAM synthase complex is composed of three subunits. PurQ produces an ammonia molecule by converting glutamine to glutamate. PurL transfers the ammonia molecule to FGAR to form FGAM in an ATP-dependent manner. PurS interacts with PurQ and PurL and is thought to assist in the transfer of the ammonia molecule from PurQ to PurL. This Listeria monocytogenes serotype 4b (strain CLIP80459) protein is Phosphoribosylformylglycinamidine synthase subunit PurQ.